Reading from the N-terminus, the 850-residue chain is Rho guanine nucleotide exchange factor 33 (850 aa).

Composition is skewed to basic and acidic residues over residues 1–13 (MEKS…ENEH) and 98–113 (EEMQ…EKRR). 2 disordered regions span residues 1–21 (MEKS…NPST) and 98–209 (EEMQ…DENL). A coiled-coil region spans residues 54–128 (LEEKVKSCRC…KAKKAQKEEH (75 aa)). Low complexity predominate over residues 130–149 (AQAGPASAPAPGSAPTQGSP). Residues 164–175 (DFTNMLPSQNYE) show a composition bias toward polar residues. The DH domain maps to 273–448 (KRQTVALELL…RVFISHYTLL (176 aa)). 2 disordered regions span residues 504–550 (EMLQ…WELE) and 702–850 (AAQA…WGWW). Composition is skewed to low complexity over residues 510–520 (PSSSSSAPAVS) and 754–770 (APHG…GAPR). R766 is modified (omega-N-methylarginine). The segment covering 773-783 (FPQQRSQSEKQ) has biased composition (polar residues). Basic and acidic residues predominate over residues 784-806 (TYLEEMHLEDATRFCPKEERESE). Basic residues predominate over residues 826–835 (SFRKLFKKKN).

This Mus musculus (Mouse) protein is Rho guanine nucleotide exchange factor 33 (Arhgef33).